The chain runs to 80 residues: Protein UL148B (80 aa).

The helical transmembrane segment at 10 to 30 threads the bilayer; the sequence is AICVGLVMGVTVIASCALLVF.

The protein localises to the host membrane. The chain is Protein UL148B (UL148B) from Homo sapiens (Human).